The primary structure comprises 433 residues: Glutamate--tRNA ligase 1 (433 aa).

The short motif at 7 to 17 (PSPTGLIHLGN) is the 'HIGH' region element. The 'KMSKS' region signature appears at 230–234 (KMSKR). ATP is bound at residue Lys-233.

The protein belongs to the class-I aminoacyl-tRNA synthetase family. Glutamate--tRNA ligase type 1 subfamily. In terms of assembly, monomer.

It is found in the cytoplasm. The catalysed reaction is tRNA(Glu) + L-glutamate + ATP = L-glutamyl-tRNA(Glu) + AMP + diphosphate. Functionally, catalyzes the attachment of glutamate to tRNA(Glu) in a two-step reaction: glutamate is first activated by ATP to form Glu-AMP and then transferred to the acceptor end of tRNA(Glu). The chain is Glutamate--tRNA ligase 1 from Neorickettsia sennetsu (strain ATCC VR-367 / Miyayama) (Ehrlichia sennetsu).